A 401-amino-acid chain; its full sequence is Mannonate dehydratase (401 aa).

This sequence belongs to the mannonate dehydratase family. Fe(2+) is required as a cofactor. It depends on Mn(2+) as a cofactor.

The catalysed reaction is D-mannonate = 2-dehydro-3-deoxy-D-gluconate + H2O. The protein operates within carbohydrate metabolism; pentose and glucuronate interconversion. Catalyzes the dehydration of D-mannonate. In Brucella canis (strain ATCC 23365 / NCTC 10854 / RM-666), this protein is Mannonate dehydratase.